The following is a 393-amino-acid chain: Formate-dependent phosphoribosylglycinamide formyltransferase (393 aa).

Residues 22–23 (EL) and Glu82 each bind N(1)-(5-phospho-beta-D-ribosyl)glycinamide. ATP contacts are provided by residues Arg114, Lys155, 160-165 (SSGKGQ), 195-198 (EGFV), and Glu203. Positions 119-308 (RLAAEELGLP…EFALHVRAFT (190 aa)) constitute an ATP-grasp domain. Residues Glu267 and Glu279 each contribute to the Mg(2+) site. Residues Asp286, Lys356, and 363–364 (RR) contribute to the N(1)-(5-phospho-beta-D-ribosyl)glycinamide site.

The protein belongs to the PurK/PurT family. As to quaternary structure, homodimer.

The catalysed reaction is N(1)-(5-phospho-beta-D-ribosyl)glycinamide + formate + ATP = N(2)-formyl-N(1)-(5-phospho-beta-D-ribosyl)glycinamide + ADP + phosphate + H(+). It functions in the pathway purine metabolism; IMP biosynthesis via de novo pathway; N(2)-formyl-N(1)-(5-phospho-D-ribosyl)glycinamide from N(1)-(5-phospho-D-ribosyl)glycinamide (formate route): step 1/1. Functionally, involved in the de novo purine biosynthesis. Catalyzes the transfer of formate to 5-phospho-ribosyl-glycinamide (GAR), producing 5-phospho-ribosyl-N-formylglycinamide (FGAR). Formate is provided by PurU via hydrolysis of 10-formyl-tetrahydrofolate. In Vibrio cholerae serotype O1 (strain M66-2), this protein is Formate-dependent phosphoribosylglycinamide formyltransferase.